The following is a 361-amino-acid chain: MIPKEEIMGIFEKYNKDEVTIVTVGSHTSLHILKGAKLEGFSTAVITTRDRDIPYKRFGVADKFIYVDKFSDISKEEIQQQLRDMNAIIVPHGSFIAYCGLDNVEDTFKVPMFGNRAILRWEAERDLEGQLLGGSGLRIPKKYGGPDDIDGPVMVKFPGARGGRGYFPCSTVEEFWRKIGEFKAKGILTEDDVKKAHIEEYVVGANYCIHYFYSPLKDQVELMGIDRRYESSIDGLVRVPAKDQLELSIDPSYVITGNFPVVIRESLLPQVFDMGDKLATKAKELVKPGMLGPFCLQSLCNENLELVVFEMSARVDGGTNTFMNGSPYSCLYTGEPLSMGQRIAKEIKLALELKMIDKVIS.

2 residues coordinate 5-amino-1-(5-phospho-beta-D-ribosyl)imidazole-4-carboxamide: His-27 and Ser-94. One can recognise an ATP-grasp domain in the interval 116–348; the sequence is RAILRWEAER…MGQRIAKEIK (233 aa). ATP is bound by residues 146–208 and Glu-230; that span reads PDDI…ANYC. Asn-258 is a binding site for 5-amino-1-(5-phospho-beta-D-ribosyl)imidazole-4-carboxamide. Mg(2+) is bound by residues Gln-297 and Glu-310.

It belongs to the phosphohexose mutase family. Mg(2+) is required as a cofactor. Requires Mn(2+) as cofactor.

It carries out the reaction 5-amino-1-(5-phospho-beta-D-ribosyl)imidazole-4-carboxamide + formate + ATP = 5-formamido-1-(5-phospho-D-ribosyl)imidazole-4-carboxamide + ADP + phosphate. The protein operates within purine metabolism; IMP biosynthesis via de novo pathway; 5-formamido-1-(5-phospho-D-ribosyl)imidazole-4-carboxamide from 5-amino-1-(5-phospho-D-ribosyl)imidazole-4-carboxamide (formate route): step 1/1. Catalyzes the ATP- and formate-dependent formylation of 5-aminoimidazole-4-carboxamide-1-beta-d-ribofuranosyl 5'-monophosphate (AICAR) to 5-formaminoimidazole-4-carboxamide-1-beta-d-ribofuranosyl 5'-monophosphate (FAICAR) in the absence of folates. The polypeptide is 5-formaminoimidazole-4-carboxamide-1-(beta)-D-ribofuranosyl 5'-monophosphate synthetase (Methanococcus maripaludis (strain C6 / ATCC BAA-1332)).